A 300-amino-acid polypeptide reads, in one-letter code: Inosose dehydratase (300 aa).

It belongs to the IolE/MocC family. Glutathione serves as cofactor. The cofactor is Co(2+). Requires Mn(2+) as cofactor.

The enzyme catalyses scyllo-inosose = 3D-3,5/4-trihydroxycyclohexane-1,2-dione + H2O. In terms of biological role, catalyzes the dehydration of inosose (2-keto-myo-inositol, 2KMI or 2,4,6/3,5-pentahydroxycyclohexanone) to 3D-(3,5/4)-trihydroxycyclohexane-1,2-dione (D-2,3-diketo-4-deoxy-epi-inositol). The protein is Inosose dehydratase of Mesomycoplasma hyopneumoniae (strain J / ATCC 25934 / NCTC 10110) (Mycoplasma hyopneumoniae).